A 171-amino-acid chain; its full sequence is uncharacterized protein (171 aa).

Positions 1–20 are cleaved as a signal peptide; sequence MRRVLFSCFCGLLWSSSGWA. An intrachain disulfide couples cysteine 40 to cysteine 80.

This sequence belongs to the fimbrial protein family.

Its subcellular location is the fimbrium. Functionally, part of the sfmACDHF fimbrial operon. Could contribute to adhesion to various surfaces in specific environmental niches. Increases adhesion to eukaryotic T24 bladder epithelial cells in the absence of fim genes. This is an uncharacterized protein from Escherichia coli (strain K12).